Reading from the N-terminus, the 331-residue chain is Phosphate acyltransferase (331 aa).

This sequence belongs to the PlsX family. In terms of assembly, homodimer. Probably interacts with PlsY.

The protein resides in the cytoplasm. It catalyses the reaction a fatty acyl-[ACP] + phosphate = an acyl phosphate + holo-[ACP]. Its pathway is lipid metabolism; phospholipid metabolism. Functionally, catalyzes the reversible formation of acyl-phosphate (acyl-PO(4)) from acyl-[acyl-carrier-protein] (acyl-ACP). This enzyme utilizes acyl-ACP as fatty acyl donor, but not acyl-CoA. This chain is Phosphate acyltransferase, found in Ureaplasma urealyticum serovar 10 (strain ATCC 33699 / Western).